A 169-amino-acid polypeptide reads, in one-letter code: Crossover junction endodeoxyribonuclease RuvC (169 aa).

Catalysis depends on residues aspartate 11, glutamate 71, and aspartate 143. The Mg(2+) site is built by aspartate 11, glutamate 71, and aspartate 143.

Belongs to the RuvC family. As to quaternary structure, homodimer which binds Holliday junction (HJ) DNA. The HJ becomes 2-fold symmetrical on binding to RuvC with unstacked arms; it has a different conformation from HJ DNA in complex with RuvA. In the full resolvosome a probable DNA-RuvA(4)-RuvB(12)-RuvC(2) complex forms which resolves the HJ. Mg(2+) serves as cofactor.

It is found in the cytoplasm. The catalysed reaction is Endonucleolytic cleavage at a junction such as a reciprocal single-stranded crossover between two homologous DNA duplexes (Holliday junction).. Its function is as follows. The RuvA-RuvB-RuvC complex processes Holliday junction (HJ) DNA during genetic recombination and DNA repair. Endonuclease that resolves HJ intermediates. Cleaves cruciform DNA by making single-stranded nicks across the HJ at symmetrical positions within the homologous arms, yielding a 5'-phosphate and a 3'-hydroxyl group; requires a central core of homology in the junction. The consensus cleavage sequence is 5'-(A/T)TT(C/G)-3'. Cleavage occurs on the 3'-side of the TT dinucleotide at the point of strand exchange. HJ branch migration catalyzed by RuvA-RuvB allows RuvC to scan DNA until it finds its consensus sequence, where it cleaves and resolves the cruciform DNA. This is Crossover junction endodeoxyribonuclease RuvC from Rhizobium johnstonii (strain DSM 114642 / LMG 32736 / 3841) (Rhizobium leguminosarum bv. viciae).